A 258-amino-acid polypeptide reads, in one-letter code: Peptide methionine sulfoxide reductase A4, chloroplastic (258 aa).

The N-terminal 53 residues, 1–53 (MQVLVVSPPLIAAASLSKPLNSLSKAALSFSRAKPICPFPQTSRRPISVYKSP), are a transit peptide targeting the chloroplast. At Met-54 the chain carries N-acetylmethionine. Residues 62 to 89 (GFGSRPQAQADPSSAAIAQGPDDDVPSS) form a disordered region. Ser-245 carries the phosphoserine modification.

Belongs to the MsrA Met sulfoxide reductase family. Expressed in rosette and cauline leaves, and at lower levels in stems and flowers (at protein level).

It localises to the plastid. The protein resides in the chloroplast stroma. The catalysed reaction is L-methionyl-[protein] + [thioredoxin]-disulfide + H2O = L-methionyl-(S)-S-oxide-[protein] + [thioredoxin]-dithiol. It catalyses the reaction [thioredoxin]-disulfide + L-methionine + H2O = L-methionine (S)-S-oxide + [thioredoxin]-dithiol. In terms of biological role, catalyzes the reduction of methionine sulfoxide (MetSO) to methionine in proteins. Plays a protective role against oxidative stress by restoring activity to proteins that have been inactivated by methionine oxidation. Prevents the methionine sulfoxidation of the heat shock protein HSP21 and its subsequent inactivation. MSRA family specifically reduces the MetSO S-enantiomer. This Arabidopsis thaliana (Mouse-ear cress) protein is Peptide methionine sulfoxide reductase A4, chloroplastic (MSR4).